Here is a 226-residue protein sequence, read N- to C-terminus: Urease accessory protein UreG (226 aa).

A disordered region spans residues 1-26 (MPPHFLDGQPHGHTDRPRRVRQPGEP). 33 to 40 (GPVGSGKT) lines the GTP pocket.

Belongs to the SIMIBI class G3E GTPase family. UreG subfamily. Homodimer. UreD, UreF and UreG form a complex that acts as a GTP-hydrolysis-dependent molecular chaperone, activating the urease apoprotein by helping to assemble the nickel containing metallocenter of UreC. The UreE protein probably delivers the nickel.

The protein localises to the cytoplasm. Facilitates the functional incorporation of the urease nickel metallocenter. This process requires GTP hydrolysis, probably effectuated by UreG. The chain is Urease accessory protein UreG from Mycolicibacterium vanbaalenii (strain DSM 7251 / JCM 13017 / BCRC 16820 / KCTC 9966 / NRRL B-24157 / PYR-1) (Mycobacterium vanbaalenii).